Reading from the N-terminus, the 272-residue chain is Protein STAY-GREEN 1, chloroplastic (272 aa).

The transit peptide at 1-50 (MGTLTTSLVVPSKLNNEQQSSIFIHKTRRKCKKNQSIVPVARLFGPAIFE) directs the protein to the chloroplast. Residues 201–222 (TSPSSSSGGVGGVKSTSFTSNS) form a disordered region.

Belongs to the staygreen family. In terms of assembly, interacts with PSY1.

The protein resides in the plastid. Its subcellular location is the chloroplast. Required to trigger chlorophyll degradation during leaf senescence and fruit ripening. Binds directly PSY1 to regulate the accumulation of lycopene and beta-carotene in the maturing fruits. The polypeptide is Protein STAY-GREEN 1, chloroplastic (Solanum lycopersicum (Tomato)).